A 151-amino-acid chain; its full sequence is 3-hydroxyacyl-[acyl-carrier-protein] dehydratase FabZ (151 aa).

Histidine 57 is a catalytic residue.

Belongs to the thioester dehydratase family. FabZ subfamily.

The protein resides in the cytoplasm. It carries out the reaction a (3R)-hydroxyacyl-[ACP] = a (2E)-enoyl-[ACP] + H2O. In terms of biological role, involved in unsaturated fatty acids biosynthesis. Catalyzes the dehydration of short chain beta-hydroxyacyl-ACPs and long chain saturated and unsaturated beta-hydroxyacyl-ACPs. This Prochlorococcus marinus (strain SARG / CCMP1375 / SS120) protein is 3-hydroxyacyl-[acyl-carrier-protein] dehydratase FabZ.